Consider the following 175-residue polypeptide: Calcineurin subunit B (175 aa).

EF-hand domains are found at residues 21-56 (AEIE…SANP), 58-88 (AKRI…FSGR), 90-125 (ETDA…MVGT), and 131-166 (QLQQ…TEVI). Ca(2+) is bound by residues Asp34, Asp36, Ser38, Ser40, Glu45, Asp66, Asp68, Ser70, Asp72, Glu77, Asp103, Asp105, Asp107, Tyr109, Glu114, Asp144, Asp146, Asp148, Lys150, and Glu155.

The protein belongs to the calcineurin regulatory subunit family. Composed of a catalytic subunit (A) and a regulatory subunit (B).

Its function is as follows. Regulatory subunit of calcineurin, a calcium-dependent, calmodulin stimulated protein phosphatase. Confers calcium sensitivity. The chain is Calcineurin subunit B (CNB1) from Kluyveromyces lactis (strain ATCC 8585 / CBS 2359 / DSM 70799 / NBRC 1267 / NRRL Y-1140 / WM37) (Yeast).